Consider the following 196-residue polypeptide: ATP-dependent Clp protease proteolytic subunit (196 aa).

Ser101 functions as the Nucleophile in the catalytic mechanism. His126 is an active-site residue.

This sequence belongs to the peptidase S14 family. Component of the chloroplastic Clp protease core complex.

Its subcellular location is the plastid. The protein resides in the chloroplast stroma. The catalysed reaction is Hydrolysis of proteins to small peptides in the presence of ATP and magnesium. alpha-casein is the usual test substrate. In the absence of ATP, only oligopeptides shorter than five residues are hydrolyzed (such as succinyl-Leu-Tyr-|-NHMec, and Leu-Tyr-Leu-|-Tyr-Trp, in which cleavage of the -Tyr-|-Leu- and -Tyr-|-Trp bonds also occurs).. Functionally, cleaves peptides in various proteins in a process that requires ATP hydrolysis. Has a chymotrypsin-like activity. Plays a major role in the degradation of misfolded proteins. The chain is ATP-dependent Clp protease proteolytic subunit from Spinacia oleracea (Spinach).